The sequence spans 706 residues: Transferrin-binding protein B (706 aa).

Positions 1–20 (MKHIPLTTLCVAISAVLLTA) are cleaved as a signal peptide. Cys21 carries N-palmitoyl cysteine lipidation. Cys21 is lipidated: S-diacylglycerol cysteine. 2 disordered regions span residues 26–92 (GSNP…KEQV) and 384–412 (GSAIASDKEKDSETKHPFTSDAKDRLEGG). Positions 42–51 (GNTGNTGNAG) are enriched in gly residues. Over residues 389 to 410 (SDKEKDSETKHPFTSDAKDRLE) the composition is skewed to basic and acidic residues.

The protein belongs to the TbpB family.

Its subcellular location is the cell outer membrane. The protein localises to the cell surface. Its function is as follows. Moraxella acquires iron by extracting it from serum transferrin (TF) in its human host. Acts as a transferrin receptor and is required for transferrin utilization. This is Transferrin-binding protein B from Moraxella catarrhalis (Branhamella catarrhalis).